Reading from the N-terminus, the 478-residue chain is Multidrug resistance outer membrane protein MdtQ (478 aa).

The N-terminal stretch at 1-21 (MNRDSFYPAIACFPLLLMLAG) is a signal peptide. C22 is lipidated: N-palmitoyl cysteine. A lipid anchor (S-diacylglycerol cysteine) is attached at C22.

It belongs to the outer membrane factor (OMF) (TC 1.B.17) family.

The protein localises to the cell outer membrane. In terms of biological role, could be involved in resistance to puromycin, acriflavine and tetraphenylarsonium chloride. In Escherichia coli O6:H1 (strain CFT073 / ATCC 700928 / UPEC), this protein is Multidrug resistance outer membrane protein MdtQ (mdtQ).